The following is a 365-amino-acid chain: MKLPHFFVLAALVLSGAAHAERIKDIAAIQGVRANQLFGYGLVVGLDGTGDQTTQTPFTTQSIANMLTQMGVNLPPGINMQLKNVAAVMVTADLPPFAQAGQAIDVTVSSIGNAKSLRGGTLVMAPLKGADGLVYAMAQGSLVVSGAGASANGSKVQVNHLSVGRIPAGATVERTVATALGESGSINLELRQSDFTTASRVVDVVNARFGADTARALNARVVAVKTPLGASERVAFLGAIEGLEVSPGQAMAKVIINARTGSVVMNQTVTLDPSAVSHGNLSVVISTAPVISQPAPFGRGETVVAAESQIEIRQQPGEVMMLKGGASLADVVKALNSIGATPQDLLAILQALKASGALRAELEVI.

Residues 1–20 (MKLPHFFVLAALVLSGAAHA) form the signal peptide.

The protein belongs to the FlgI family. In terms of assembly, the basal body constitutes a major portion of the flagellar organelle and consists of four rings (L,P,S, and M) mounted on a central rod.

It is found in the periplasm. The protein resides in the bacterial flagellum basal body. In terms of biological role, assembles around the rod to form the L-ring and probably protects the motor/basal body from shearing forces during rotation. This is Flagellar P-ring protein from Thiobacillus denitrificans (strain ATCC 25259 / T1).